Here is a 354-residue protein sequence, read N- to C-terminus: Guanine nucleotide-binding protein G(i) subunit alpha (354 aa).

A lipid anchor (N-myristoyl glycine) is attached at Gly2. Cys3 carries the S-palmitoyl cysteine lipid modification. The G-alpha domain occupies 32-354 (REVKLLLLGA…KNNLKDCGLF (323 aa)). The tract at residues 35–48 (KLLLLGAGESGKST) is G1 motif. GTP-binding positions include 40–47 (GAGESGKS), 175–181 (LRTRVKT), 200–204 (DVGGQ), 269–272 (NKKD), and Ala326. Mg(2+) contacts are provided by Ser47 and Thr181. The tract at residues 173–181 (DVLRTRVKT) is G2 motif. Residues 196–205 (FKMFDVGGQR) form a G3 motif region. The tract at residues 265 to 272 (ILFLNKKD) is G4 motif. A G5 motif region spans residues 324 to 329 (TCATDT).

It belongs to the G-alpha family. G(i/o/t/z) subfamily. G proteins are composed of 3 units; alpha, beta and gamma. The alpha chain contains the guanine nucleotide binding site.

Functionally, guanine nucleotide-binding proteins (G proteins) are involved as modulators or transducers in various transmembrane signaling systems. This G protein is involved in 1-methyladenine-induced oocyte maturation. This chain is Guanine nucleotide-binding protein G(i) subunit alpha, found in Patiria pectinifera (Starfish).